The sequence spans 1131 residues: Kinesin-like protein CG14535 (1131 aa).

A compositionally biased stretch (polar residues) spans 1 to 11; the sequence is MATTSTSNMSR. The disordered stretch occupies residues 1 to 25; sequence MATTSTSNMSRNGGFCGALQRAPPP. The region spanning 44-396 is the Kinesin motor domain; sequence KVKVMLRVAD…IQIASRIHRL (353 aa). Disordered stretches follow at residues 472 to 494, 693 to 753, 905 to 926, and 1016 to 1072; these read ALKG…MMMK, DLPD…SRDI, PAYR…QGSL, and TSSE…QRHR. Over residues 483-494 the composition is skewed to low complexity; sequence SKSASNSPMMMK. Polar residues predominate over residues 1016–1032; that stretch reads TSSEAYDSGHDSNSTPR.

This sequence belongs to the TRAFAC class myosin-kinesin ATPase superfamily. Kinesin family. KIF26 subfamily.

Its subcellular location is the cytoplasm. It is found in the cytoskeleton. The polypeptide is Kinesin-like protein CG14535 (Drosophila melanogaster (Fruit fly)).